Reading from the N-terminus, the 430-residue chain is Putative O-antigen transporter (430 aa).

12 consecutive transmembrane segments (helical) span residues 23–39 (IIIAGVQLASISYLISM), 45–61 (YAIFSLLTGLLVWCSAV), 96–112 (IAIIFFIALFYIFSGVI), 131–147 (LFFTSCLVFSSIGIGAI), 163–179 (LLNALSYMIGMLGLLYI), 192–208 (LIVLYLPVGMISLCYIV), 236–252 (LFTLLSIVVLQTDYMVI), 266–282 (VTMKIFGLVFFIYTAIL), 309–325 (ILLGSLYVVGCTIFIYL), 342–358 (VSILSFMLIGIYFCIRV), 373–389 (LKILWILVPLQAIIGGI), and 400–416 (ISGVLLGLIISFALTVF).

The protein resides in the cell inner membrane. It functions in the pathway bacterial outer membrane biogenesis; LPS O-antigen biosynthesis. May be involved in the translocation process of the nascent O-polysaccharide molecules and/or its ligation to lipid A core units. The polypeptide is Putative O-antigen transporter (rfbX) (Salmonella typhimurium (strain LT2 / SGSC1412 / ATCC 700720)).